A 209-amino-acid polypeptide reads, in one-letter code: Thymidine kinase (209 aa).

Residues 9–16 (SAMNAGKT) and 88–91 (DEAQ) each bind ATP. Residue glutamate 89 is the Proton acceptor of the active site.

It belongs to the thymidine kinase family. Homotetramer.

It is found in the cytoplasm. It carries out the reaction thymidine + ATP = dTMP + ADP + H(+). The sequence is that of Thymidine kinase from Xanthomonas axonopodis pv. citri (strain 306).